The sequence spans 246 residues: Bis(5'-nucleosyl)-tetraphosphatase PrpE [asymmetrical] (246 aa).

It belongs to the PrpE family. Ni(2+) serves as cofactor.

The enzyme catalyses P(1),P(4)-bis(5'-guanosyl) tetraphosphate + H2O = GMP + GTP + 2 H(+). In terms of biological role, asymmetrically hydrolyzes Ap4p to yield AMP and ATP. This is Bis(5'-nucleosyl)-tetraphosphatase PrpE [asymmetrical] from Bacillus cereus (strain Q1).